Reading from the N-terminus, the 245-residue chain is tRNA1(Val) (adenine(37)-N6)-methyltransferase (245 aa).

Belongs to the methyltransferase superfamily. tRNA (adenine-N(6)-)-methyltransferase family.

Its subcellular location is the cytoplasm. It carries out the reaction adenosine(37) in tRNA1(Val) + S-adenosyl-L-methionine = N(6)-methyladenosine(37) in tRNA1(Val) + S-adenosyl-L-homocysteine + H(+). Functionally, specifically methylates the adenine in position 37 of tRNA(1)(Val) (anticodon cmo5UAC). The polypeptide is tRNA1(Val) (adenine(37)-N6)-methyltransferase (Erwinia tasmaniensis (strain DSM 17950 / CFBP 7177 / CIP 109463 / NCPPB 4357 / Et1/99)).